A 2172-amino-acid chain; its full sequence is Non-reducing polyketide synthase dpfgA (2172 aa).

The segment at 74-181 is N-terminal acylcarrier protein transacylase domain (SAT); the sequence is EWIKCGNSSL…LALCVGALVD (108 aa). The Ketosynthase family 3 (KS3) domain maps to 389–783; the sequence is DDSIAIIGVS…GTNAAMLVCQ (395 aa). Residues Cys529, His665, and His706 each act as for beta-ketoacyl synthase activity in the active site. The malonyl-CoA:ACP transacylase (MAT) domain stretch occupies residues 895–1197; sequence VFAGQTGRQA…SFHSILLQGQ (303 aa). The active-site For acyl/malonyl transferase activity is Ser981. Positions 1270-1403 are N-terminal hotdog fold; that stretch reads PELVSLAGPT…GTINWQGQGC (134 aa). In terms of domain architecture, PKS/mFAS DH spans 1270–1581; it reads PELVSLAGPT…LKRIPIRSLQ (312 aa). The interval 1277–1575 is product template (PT) domain; it reads GPTDGETVEF…EIIGASLKRI (299 aa). The C-terminal hotdog fold stretch occupies residues 1428–1581; the sequence is SASTVQGLFV…LKRIPIRSLQ (154 aa). Disordered regions lie at residues 1608–1631 and 1650–1672; these read DSDSDLPDSEANSPRVGSDLHADF and YPMDSSSFSSAQPPSSASSVLSD. Low complexity predominate over residues 1650-1668; sequence YPMDSSSFSSAQPPSSASS. Residues 1671 to 1747 form the Carrier domain; it reads SDHDQESTAL…DLYRMVLNHD (77 aa). An O-(pantetheine 4'-phosphoryl)serine modification is found at Ser1707. Positions 1751-1773 are disordered; sequence DRGSTVLSDKAPKSKSDSSLHGQ. Positions 1975–2155 are methyltransferase (CMeT) domain; it reads EFLHRVLSRL…DAGFIHVDWT (181 aa).

It functions in the pathway secondary metabolite biosynthesis; terpenoid biosynthesis. Non-reducing polyketide synthase; part of the gene cluster that mediates the biosynthesis of diterpenoid pyrones. The first step of the pathway is the synthesis of the alpha-pyrone moiety by the polyketide synthase dpfgA via condensation of one acetyl-CoA starter unit with 3 malonyl-CoA units and 2 methylations. The alpha-pyrone is then combined with geranylgeranyl pyrophosphate (GGPP) formed by the GGPP synthase dpfgD through the action of the prenyltransferase dpfgC to yield a linear alpha-pyrone diterpenoid. Subsequent steps in the diterpenoid pyrone biosynthetic pathway involve the decalin core formation, which is initiated by the epoxidation of the C10-C11 olefin by the FAD-dependent oxidoreductase dpfgE, and is followed by a cyclization cascade catalyzed by the terpene cyclase dpfgB. The short chain dehydrogenase/reductase dpfgG then oxidizes the 8S hydroxy group to a ketone and the short chain dehydrogenase/reductase dpfgH reduces the ketone to the 8R hydroxy group to yield higginsianin B. Higginsianin B is further methylated by the methyltransferase dpfgI to produce the intermediate named FDDP B. The cytochrome P450 monooxygenase dfgpJ then catalyzes a three-step oxidation at C-27 to generate a carboxylic acid as well as C-26 hydroxylation. Finally, methyltransferase dpfgK methylates the carboxylic acid generated by dpfgJ, yielding the final diterpenoid pyrones from the pathway which were named FDDP D and FDDP E. This is Non-reducing polyketide synthase dpfgA from Gibberella zeae (strain ATCC MYA-4620 / CBS 123657 / FGSC 9075 / NRRL 31084 / PH-1) (Wheat head blight fungus).